A 162-amino-acid polypeptide reads, in one-letter code: Ribose-5-phosphate isomerase B (162 aa).

Residues 11 to 12 and 70 to 74 contribute to the D-ribulose 5-phosphate site; these read DH and GSGNG. Glu-75 serves as the catalytic Proton acceptor. Residue His-102 is the Proton donor of the active site. Positions 103, 113, 137, and 141 each coordinate D-ribulose 5-phosphate.

Belongs to the LacAB/RpiB family. Homodimer.

The catalysed reaction is aldehydo-D-ribose 5-phosphate = D-ribulose 5-phosphate. It participates in carbohydrate degradation; pentose phosphate pathway; D-ribose 5-phosphate from D-ribulose 5-phosphate (non-oxidative stage): step 1/1. Its function is as follows. Catalyzes the interconversion of ribulose-5-P and ribose-5-P. The protein is Ribose-5-phosphate isomerase B of Mycobacterium leprae (strain TN).